Here is a 20-residue protein sequence, read N- to C-terminus: TDMLAVSVSSTDAIGHKYGT.

Positions 1-20 (TDMLAVSVSSTDAIGHKYGT) are disordered.

In terms of assembly, homodimer; may be disulfide-linked. In terms of processing, the N-terminus is blocked.

The enzyme catalyses a phosphate monoester + H2O = an alcohol + phosphate. With respect to regulation, completely inhibited by thiol-reducing agents, such as DTT and 2-mercaptoethanol. Activity was also inhibited by sodium orthovanadate, sodium molybdate, N-ethylmaleimide, EDTA and zinc ion, but was not inhibited by okadaic acid. In terms of biological role, acts against tyrosine-phosphatases. This chain is Alkaline phosphatase, found in Prevotella intermedia.